Here is a 592-residue protein sequence, read N- to C-terminus: Neurogenic locus notch homolog protein (592 aa).

Residues 1–19 (MIFVLTLVALCTAIHCPDG) form the signal peptide. 6 EGF-like domains span residues 64 to 104 (YPSI…DYQV), 106 to 146 (VPEA…EKCT), 267 to 307 (YPEA…NTCI), 353 to 387 (NSQT…PTCE), 453 to 488 (VPNS…ALCE), and 546 to 588 (IDGE…KHCN). 15 disulfides stabilise this stretch: C68–C82, C76–C92, C110–C123, C117–C134, C136–C145, C271–C284, C278–C293, C295–C306, C362–C375, C377–C386, C457–C471, C478–C487, C550–C565, C555–C576, and C578–C587. Residue N552 is glycosylated (N-linked (GlcNAc...) asparagine).

It belongs to the NOTCH family. In terms of assembly, interacts with EB1.

It is found in the cell projection. Its subcellular location is the cilium. The protein localises to the flagellum. It localises to the cytoplasm. The protein resides in the cytoskeleton. It is found in the flagellum axoneme. The chain is Neurogenic locus notch homolog protein from Giardia intestinalis (strain ATCC 50803 / WB clone C6) (Giardia lamblia).